A 29-amino-acid polypeptide reads, in one-letter code: Cytochrome b6-f complex subunit 8 (29 aa).

Residues 3–23 (IVGIAWAALMVVFTFSLSLVV) form a helical membrane-spanning segment.

This sequence belongs to the PetN family. The 4 large subunits of the cytochrome b6-f complex are cytochrome b6, subunit IV (17 kDa polypeptide, PetD), cytochrome f and the Rieske protein, while the 4 small subunits are PetG, PetL, PetM and PetN. The complex functions as a dimer.

The protein localises to the plastid. The protein resides in the chloroplast thylakoid membrane. In terms of biological role, component of the cytochrome b6-f complex, which mediates electron transfer between photosystem II (PSII) and photosystem I (PSI), cyclic electron flow around PSI, and state transitions. The sequence is that of Cytochrome b6-f complex subunit 8 from Cryptomeria japonica (Japanese cedar).